The sequence spans 368 residues: Homoserine O-acetyltransferase (368 aa).

The AB hydrolase-1 domain occupies 41 to 352 (NVILITHALS…DYGHDSFLVE (312 aa)). Catalysis depends on Ser-147, which acts as the Nucleophile. Arg-219 contributes to the substrate binding site. Active-site residues include Asp-313 and His-346. Residue Asp-347 participates in substrate binding.

This sequence belongs to the AB hydrolase superfamily. MetX family. As to quaternary structure, homodimer.

The protein localises to the cytoplasm. The catalysed reaction is L-homoserine + acetyl-CoA = O-acetyl-L-homoserine + CoA. The protein operates within amino-acid biosynthesis; L-methionine biosynthesis via de novo pathway; O-acetyl-L-homoserine from L-homoserine: step 1/1. Transfers an acetyl group from acetyl-CoA to L-homoserine, forming acetyl-L-homoserine. The protein is Homoserine O-acetyltransferase of Nautilia profundicola (strain ATCC BAA-1463 / DSM 18972 / AmH).